A 788-amino-acid chain; its full sequence is Endonuclease MutS2 (788 aa).

Residue 332–339 (GPNTGGKT) participates in ATP binding. Residues 713 to 788 (VDLRGMDAEE…GTGVTVVELK (76 aa)) enclose the Smr domain.

This sequence belongs to the DNA mismatch repair MutS family. MutS2 subfamily. In terms of assembly, homodimer. Binds to stalled ribosomes, contacting rRNA.

Its function is as follows. Endonuclease that is involved in the suppression of homologous recombination and thus may have a key role in the control of bacterial genetic diversity. Functionally, acts as a ribosome collision sensor, splitting the ribosome into its 2 subunits. Detects stalled/collided 70S ribosomes which it binds and splits by an ATP-hydrolysis driven conformational change. Acts upstream of the ribosome quality control system (RQC), a ribosome-associated complex that mediates the extraction of incompletely synthesized nascent chains from stalled ribosomes and their subsequent degradation. Probably generates substrates for RQC. In Clostridium botulinum (strain Kyoto / Type A2), this protein is Endonuclease MutS2.